Consider the following 522-residue polypeptide: F-box/LRR-repeat protein 16 (522 aa).

Residues Y38–L84 form the F-box domain. 10 LRR repeats span residues S115–G140, C141–S166, F169–R191, R266–K290, T291–G316, V319–G344, T348–G369, S370–I393, G395–K420, and C421–E447.

The protein is F-box/LRR-repeat protein 16 (FBL16) of Arabidopsis thaliana (Mouse-ear cress).